The primary structure comprises 328 residues: Tetraacyldisaccharide 4'-kinase (328 aa).

Residue 55-62 (TAGGNGKT) participates in ATP binding.

This sequence belongs to the LpxK family.

The enzyme catalyses a lipid A disaccharide + ATP = a lipid IVA + ADP + H(+). The protein operates within glycolipid biosynthesis; lipid IV(A) biosynthesis; lipid IV(A) from (3R)-3-hydroxytetradecanoyl-[acyl-carrier-protein] and UDP-N-acetyl-alpha-D-glucosamine: step 6/6. In terms of biological role, transfers the gamma-phosphate of ATP to the 4'-position of a tetraacyldisaccharide 1-phosphate intermediate (termed DS-1-P) to form tetraacyldisaccharide 1,4'-bis-phosphate (lipid IVA). This is Tetraacyldisaccharide 4'-kinase from Shigella dysenteriae serotype 1 (strain Sd197).